Reading from the N-terminus, the 251-residue chain is Small ribosomal subunit protein uS2 (251 aa).

An N-acetylserine modification is found at Ser-2. Positions 213-251 are disordered; the sequence is QVAEEATAAADEDVKEEVAEEQTEAADWAEGNTEEVASW. Positions 222–236 are enriched in acidic residues; the sequence is ADEDVKEEVAEEQTE.

The protein belongs to the universal ribosomal protein uS2 family. Component of the small ribosomal subunit. Mature ribosomes consist of a small (40S) and a large (60S) subunit. The 40S subunit contains about 33 different proteins and 1 molecule of RNA (18S). The 60S subunit contains about 49 different proteins and 3 molecules of RNA (25S, 5.8S and 5S). Interacts with RPS21.

Its subcellular location is the cytoplasm. In terms of biological role, required for the assembly and/or stability of the 40S ribosomal subunit. Required for the processing of the 20S rRNA-precursor to mature 18S rRNA in a late step of the maturation of 40S ribosomal subunits. In Lachancea thermotolerans (strain ATCC 56472 / CBS 6340 / NRRL Y-8284) (Yeast), this protein is Small ribosomal subunit protein uS2.